Consider the following 1058-residue polypeptide: MQKIAKQALSSLSSLAKSPANAMGSISHLPAYGHRLLPVLIDEISRDEPDRVLFYTPRNGQPSQGYDEVTTKIFANAIDRLCGWLDSQLGSPTVSKTIAYIGQNDLRYFIIMIASTKLGHRLLLSSPRNSVEGHVSLIKQSGCELWIASSGLGHHEFLQDLHIPSVEAPELSELLDPTLAKPYIYQKSWHEGKSDVLALLHTSGSTGLPKLVPVYLETAATVDGFHLMEPTDGKRPTGVEWTGTRQLCAMPLFHVAGICLGLYSAVFFNWIVVLPSVGPIMQHVIEDALDHISLDSAFISPSVLQDISKSSRVLEKLSKLKFITSAGGPIPQSVGDLIHPRVPIMQTMGMTEGQWLASVVMHPDEWAYYYFHPRTGVEMRPYSEDLFELVFVQNPKLSATQPVFKTFPDLDIWETKDLYSRHPKHPDLWKYEMRRDDLIILSNGEKFNPLAAEGKLISHPWIAAAYLTGRGRFQTAALIYPDDSSFNNSDDTIIDNIWPTFEEVNKSLPAFAQIHRDFVKIVRTPFPCTPKGTLARNETEKSFNADINAIYDRSTHGKPSVHINGTTEDVVRSGIREAIETVSGLVDLKDDDNIFTRGFDSLHVIRLAGLLSSAFYQPLEVEPGTIYTNPTISQLSHSVWTHLEYGPQDRIHHSEVTLEMLAKYIQAFEPPRESKEHIVLTGTTGEIGSYLLDDICKNDKVAKVWCLNRSVDAFQRQVDSAKSKGLSSNWQSKAKFVRYDVTSENLGLSQDDLEEIKNEATAIIHNAWEVNFNLPLSSFDPQFVGLQGLVDVCRATRHKIRFFFVSSISAAMNWPSDLLGPVPEASISRFDAPINGYGSSKLVAEHLLSKAARSGVLSLSVLRVGQVAGPVRTLGEGSIWTRRDWVPAIIDASVHLRALPLDLGSASILDWIPIDLLAEVIGQLVVPVNPVVGQENYYNLLNPRTPSWKDTLPGLKAHLEASFSEKFEIIPLQEWINRMRGAEKTIVKEVSEGSSETARRAQSGLKLLAFFETLASETEGSRGLEWSKANALAQSSILACMEPVSSAWFDTWLTQWGY.

The interval 43–365 is adenylation (A) domain; that stretch reads EISRDEPDRV…LASVVMHPDE (323 aa). Positions 566 to 643 constitute a Carrier domain; that stretch reads TTEDVVRSGI…QLSHSVWTHL (78 aa). The residue at position 601 (S601) is an O-(pantetheine 4'-phosphoryl)serine. Residues 680–921 are thioester reductase (TR) domain; sequence LTGTTGEIGS…IPIDLLAEVI (242 aa).

It functions in the pathway mycotoxin biosynthesis. Functionally, non-canonical non-ribosomal peptide synthetase; part of the gene cluster that mediates the biosynthesis of fusaric acid, a mycotoxin with low to moderate toxicity to animals and humans, but with high phytotoxic properties. L-aspartate is suggested as fusaric acid amino acid precursor that is activated and further processed to O-acetyl-L-homoserine by cluster enzymes aspartate kinase FUB3 and homoserine O-acetyltransferase FUB5, as well as enzymes of the primary metabolism. The polyketide synthase (PKS) FUB1 generates the triketide trans-2-hexenal which is presumptively released by the hydrolase FUB4 and linked to the NRPS-bound amino acid precursor by NAD(P)-dependent dehydrogenase FUB6. FUB1, FUB4, and the non-canonical NRPS Fub8 may form an enzyme complex. Further processing of the NRPS-bound intermediate might be carried out by FUB6 and the sulfhydrylase FUB7, enabling a spontaneous electrocyclization to close the carbon backbone of fusaric acid. Dihydrofusaric acid is likely to be released via reduction by the thioester reductase (TR) domain of FUB8 whereupon the final oxidation to fusaric acid may (also) be performed by the FMN-dependent dehydrogenase FUB9. In Gibberella moniliformis (strain M3125 / FGSC 7600) (Maize ear and stalk rot fungus), this protein is Non-canonical non-ribosomal peptide synthetase FUB8.